The primary structure comprises 227 residues: ATP synthase F(0) complex subunit a (227 aa).

A run of 6 helical transmembrane segments spans residues 14 to 34 (LLGI…FPTP), 69 to 89 (WATI…LGLL), 99 to 119 (LSLN…IGML), 137 to 157 (LLIP…PLAL), 180 to 200 (FVLI…LFLL), and 202 to 222 (ILEV…LSLY).

It belongs to the ATPase A chain family. Component of the ATP synthase complex composed at least of ATP5F1A/subunit alpha, ATP5F1B/subunit beta, ATP5MC1/subunit c (homooctomer), MT-ATP6/subunit a, MT-ATP8/subunit 8, ATP5ME/subunit e, ATP5MF/subunit f, ATP5MG/subunit g, ATP5MK/subunit k, ATP5MJ/subunit j, ATP5F1C/subunit gamma, ATP5F1D/subunit delta, ATP5F1E/subunit epsilon, ATP5PF/subunit F6, ATP5PB/subunit b, ATP5PD/subunit d, ATP5PO/subunit OSCP. ATP synthase complex consists of a soluble F(1) head domain (subunits alpha(3) and beta(3)) - the catalytic core - and a membrane F(0) domain - the membrane proton channel (subunits c, a, 8, e, f, g, k and j). These two domains are linked by a central stalk (subunits gamma, delta, and epsilon) rotating inside the F1 region and a stationary peripheral stalk (subunits F6, b, d, and OSCP). Interacts with DNAJC30; interaction is direct.

It localises to the mitochondrion inner membrane. It catalyses the reaction H(+)(in) = H(+)(out). Its function is as follows. Subunit a, of the mitochondrial membrane ATP synthase complex (F(1)F(0) ATP synthase or Complex V) that produces ATP from ADP in the presence of a proton gradient across the membrane which is generated by electron transport complexes of the respiratory chain. ATP synthase complex consist of a soluble F(1) head domain - the catalytic core - and a membrane F(1) domain - the membrane proton channel. These two domains are linked by a central stalk rotating inside the F(1) region and a stationary peripheral stalk. During catalysis, ATP synthesis in the catalytic domain of F(1) is coupled via a rotary mechanism of the central stalk subunits to proton translocation. With the subunit c (ATP5MC1), forms the proton-conducting channel in the F(0) domain, that contains two crucial half-channels (inlet and outlet) that facilitate proton movement from the mitochondrial intermembrane space (IMS) into the matrix. Protons are taken up via the inlet half-channel and released through the outlet half-channel, following a Grotthuss mechanism. The protein is ATP synthase F(0) complex subunit a of Squalus acanthias (Spiny dogfish).